The chain runs to 708 residues: DNA-directed RNA polymerase III subunit RPC5 (708 aa).

Basic and acidic residues predominate over residues 146 to 155 (DAKHREREAA). The segment at 146–170 (DAKHREREAANEAGDSSQDEAEDDV) is disordered. 2 positions are modified to phosphoserine: Ser161 and Ser162. A Glycyl lysine isopeptide (Lys-Gly) (interchain with G-Cter in SUMO2) cross-link involves residue Lys171. Phosphoserine is present on Ser192. Phosphotyrosine is present on Tyr224. Lys432 participates in a covalent cross-link: Glycyl lysine isopeptide (Lys-Gly) (interchain with G-Cter in SUMO2). A disordered region spans residues 485–552 (QLRVPAVPPG…DSFNGHPPQG (68 aa)). Residue Lys498 forms a Glycyl lysine isopeptide (Lys-Gly) (interchain with G-Cter in SUMO1); alternate linkage. A Glycyl lysine isopeptide (Lys-Gly) (interchain with G-Cter in SUMO2); alternate cross-link involves residue Lys498. Residues 502-519 (VSEEGEEDEEQEAEEEPM) are compositionally biased toward acidic residues. 2 positions are modified to phosphoserine: Ser503 and Ser522. Residues 556–708 (TPVARELKAF…MWYLKGTVQS (153 aa)) are required for Pol III complex stability. Lys659 participates in a covalent cross-link: Glycyl lysine isopeptide (Lys-Gly) (interchain with G-Cter in SUMO2).

As to quaternary structure, component of the RNA polymerase III complex consisting of at least 17 subunits: a ten-subunit horseshoe-shaped catalytic core composed of POLR3A/RPC1, POLR3B/RPC2, POLR1C/RPAC1, POLR1D/RPAC2, POLR3K/RPC10, POLR2E/RPABC1, POLR2F/RPABC2, POLR2H/RPABC3, POLR2K/RPABC4 and POLR2L/RPABC5; the stalk composed of two subunits POLR3H/RPC8 and CRCP/RPC9, forming a structural mobile part that protrudes out of the core and functions primarily in transcription initiation; and additional subunits homologous to general transcription factors of the RNA polymerase II machinery, POLR3D/RPC4-POLR3E/RPC5 heterodimer and POLR3/CRPC3-POLR3F/RPC6-POLR3G/RPC7 heterotrimer.

Its subcellular location is the nucleus. DNA-dependent RNA polymerase catalyzes the transcription of DNA into RNA using the four ribonucleoside triphosphates as substrates. Specific peripheric component of RNA polymerase III (Pol III) which synthesizes small non-coding RNAs including 5S rRNA, snRNAs, tRNAs and miRNAs from at least 500 distinct genomic loci. Assembles with POLR3D/RPC4 forming a subcomplex that binds the Pol III core. Enables recruitment of Pol III at transcription initiation site and drives transcription initiation from both type 2 and type 3 DNA promoters. Required for efficient transcription termination and reinitiation. Plays a key role in sensing and limiting infection by intracellular bacteria and DNA viruses. Acts as a nuclear and cytosolic DNA sensor involved in innate immune response. Can sense non-self dsDNA that serves as template for transcription into dsRNA. The non-self RNA polymerase III transcripts, such as Epstein-Barr virus-encoded RNAs (EBERs) induce type I interferon and NF-kappa-B through the RIG-I pathway. The polypeptide is DNA-directed RNA polymerase III subunit RPC5 (Homo sapiens (Human)).